Here is a 37-residue protein sequence, read N- to C-terminus: Pi-theraphotoxin-Hm3a (37 aa).

Cystine bridges form between Cys3–Cys18, Cys10–Cys23, and Cys17–Cys33.

Belongs to the psalmotoxin-1 family. Expressed by the venom gland.

Its subcellular location is the secreted. In terms of biological role, this toxin acts on different isoforms of acid-sensing ion channel ASIC1 in a similar manner to psalmotoxin-1 (AC P60514). On ASIC1a homotrimer, it provokes a pH-dependent inhibition (IC(50)=39.7 nM on human and IC(50)=1.3 nM on rat channels), whereas it potentiates ASIC1b homotrimer and ASIC1a-ASIC1b heterotrimer (EC(50)=178.1 nM on human ASIC1b, EC(50)=46.5 nM on rat ASIC1b and EC(50)=17.4 nM on rat ASIC1a-ASIC1b channels). On rat ASIC1a, it acts by inhibiting channel currents by shifting the pH of half-maximal effect (pH(50)) of steady-state desensitization and activation to more alkaline values. In Heteroscodra maculata (Togo starburst tarantula), this protein is Pi-theraphotoxin-Hm3a.